Consider the following 703-residue polypeptide: Antigen peptide transporter 2 (703 aa).

The Lumenal portion of the chain corresponds to 1–6 (MALSHP). Residues 7–27 (RPWASLLLVDLALLGLLQSSL) traverse the membrane as a helical segment. Residues 28 to 56 (GTLLPPGLPGLWLEGTLRLGVLWGLLKVG) lie on the Cytoplasmic side of the membrane. The chain crosses the membrane as a helical span at residues 57-77 (GLLRLVGTFLPLLCLTNPLFF). Over 78 to 98 (SLRALVGSTMSTSVVRVASAS) the chain is Lumenal. Residues 99–119 (WGWLLADYGAVALSLAVWAVL) traverse the membrane as a helical segment. The Cytoplasmic portion of the chain corresponds to 120-148 (SPAGAQEKEPGQENNRALMIRLLRLSKPD). A helical membrane pass occupies residues 149-169 (LPFLIVAFIFLAMAVWWEMFI). An ABC transmembrane type-1 domain is found at 152 to 435 (LIVAFIFLAM…LVYMYGDMLS (284 aa)). Topologically, residues 170 to 187 (PHYSGRVIDILGGDFDPD) are lumenal. Residues 188-208 (AFASAIFFMCLFSVGSSLSAG) traverse the membrane as a helical segment. Residues 209–266 (CRGGSFLFAESRINLRIREQLFSSLLRQDLAFFQETKTGELNSRLSSDTSLMSQWLSL) lie on the Cytoplasmic side of the membrane. The chain crosses the membrane as a helical span at residues 267 to 287 (NANILLRSLVKVVGLYYFMLQ). Residues 288-293 (VSPRLT) are Lumenal-facing. A helical transmembrane segment spans residues 294–314 (FLSLLDLPLTIAAEKVYNPRH). The tract at residues 301–389 (PLTIAAEKVY…QRVMALGMQV (89 aa)) is part of the peptide-binding site. Over 315-374 (QAVLKEIQDAVAKAGQVVREAVGGLQTVRSFGAEEQEVRRYKEALERCRQLWWRRDLEKS) the chain is Cytoplasmic. The helical transmembrane segment at 375-395 (LYLVIQRVMALGMQVLILNVG) threads the bilayer. The Lumenal portion of the chain corresponds to 396-408 (VQQILAGEVTRGG). The chain crosses the membrane as a helical span at residues 409–429 (LLSFLLYQEEVGHHVQNLVYM). A part of the peptide-binding site region spans residues 414 to 433 (LYQEEVGHHVQNLVYMYGDM). The Cytoplasmic segment spans residues 430–703 (YGDMLSNVGA…AHLVQQRLEA (274 aa)). The ABC transporter domain occupies 468–702 (VEFQDVSFSY…YAHLVQQRLE (235 aa)). 503–510 (GPNGSGKS) contributes to the ATP binding site.

This sequence belongs to the ABC transporter superfamily. ABCB family. MHC peptide exporter (TC 3.A.1.209) subfamily. As to quaternary structure, heterodimer of TAP1 and TAP2 (TAP1-TAP2). A component of the peptide loading complex (PLC), interacts via TAPBP with MHCI heterodimer; this interaction mediates peptide-MHCI assembly. Mg(2+) is required as a cofactor.

It is found in the endoplasmic reticulum membrane. The catalysed reaction is a peptide antigen(in) + ATP + H2O = a peptide antigen(out) + ADP + phosphate + H(+). ABC transporter associated with antigen processing. In complex with TAP1 mediates unidirectional translocation of peptide antigens from cytosol to endoplasmic reticulum (ER) for loading onto MHC class I (MHCI) molecules. Uses the chemical energy of ATP to export peptides against the concentration gradient. During the transport cycle alternates between 'inward-facing' state with peptide binding site facing the cytosol to 'outward-facing' state with peptide binding site facing the ER lumen. Peptide antigen binding to ATP-loaded TAP1-TAP2 induces a switch to hydrolysis-competent 'outward-facing' conformation ready for peptide loading onto nascent MHCI molecules. Subsequently ATP hydrolysis resets the transporter to the 'inward facing' state for a new cycle. As a component of the peptide loading complex (PLC), acts as a molecular scaffold essential for peptide-MHCI assembly and antigen presentation. The chain is Antigen peptide transporter 2 (Tap2) from Rattus norvegicus (Rat).